A 340-amino-acid polypeptide reads, in one-letter code: MMNERAQHLLKALIERYIADGQPVASKTLSLLPGVELSSATVRNVLADLENMGLIASPHTSAGRVPTARGYRLFVDRLLTIRPLDELSRHELEANLQPDSPQRIVQAASSLLSELTSFAGVVLTPQRSDVAFRQIEFLRLSERRVLMILVTLDGDVQNHLLVTERDYTPSELIEAGNFINQHYAGQGLSAVAQRVESELKQLQGDIAELMAAAVKLGQQTLAKRSEDVVVSGGSRLLQVHDLSDDLSRLRELFGVFERKTELLKLLAQGREAQGVNIFIGEESGVMTLDECSVVTAPYCINGQVVGTLGVVGPTRMAYERVIPIVDITARLVSNALSFRE.

The protein belongs to the HrcA family.

Its function is as follows. Negative regulator of class I heat shock genes (grpE-dnaK-dnaJ and groELS operons). Prevents heat-shock induction of these operons. The chain is Heat-inducible transcription repressor HrcA from Chromobacterium violaceum (strain ATCC 12472 / DSM 30191 / JCM 1249 / CCUG 213 / NBRC 12614 / NCIMB 9131 / NCTC 9757 / MK).